The chain runs to 241 residues: Phosphoribosylaminoimidazole-succinocarboxamide synthase (241 aa).

It belongs to the SAICAR synthetase family.

It catalyses the reaction 5-amino-1-(5-phospho-D-ribosyl)imidazole-4-carboxylate + L-aspartate + ATP = (2S)-2-[5-amino-1-(5-phospho-beta-D-ribosyl)imidazole-4-carboxamido]succinate + ADP + phosphate + 2 H(+). It participates in purine metabolism; IMP biosynthesis via de novo pathway; 5-amino-1-(5-phospho-D-ribosyl)imidazole-4-carboxamide from 5-amino-1-(5-phospho-D-ribosyl)imidazole-4-carboxylate: step 1/2. This Lacticaseibacillus paracasei (strain ATCC 334 / BCRC 17002 / CCUG 31169 / CIP 107868 / KCTC 3260 / NRRL B-441) (Lactobacillus paracasei) protein is Phosphoribosylaminoimidazole-succinocarboxamide synthase.